A 514-amino-acid chain; its full sequence is 2-isopropylmalate synthase (514 aa).

Residues 5 to 267 (LVIFDTTLRD…DTRIHTPEIL (263 aa)) form the Pyruvate carboxyltransferase domain. Mn(2+) is bound by residues Asp14, His202, His204, and Asn238. The interval 394–514 (RLVALKVGTQ…GSKEHPQAHV (121 aa)) is regulatory domain.

Belongs to the alpha-IPM synthase/homocitrate synthase family. LeuA type 1 subfamily. In terms of assembly, homodimer. The cofactor is Mn(2+).

It is found in the cytoplasm. It carries out the reaction 3-methyl-2-oxobutanoate + acetyl-CoA + H2O = (2S)-2-isopropylmalate + CoA + H(+). It functions in the pathway amino-acid biosynthesis; L-leucine biosynthesis; L-leucine from 3-methyl-2-oxobutanoate: step 1/4. Functionally, catalyzes the condensation of the acetyl group of acetyl-CoA with 3-methyl-2-oxobutanoate (2-ketoisovalerate) to form 3-carboxy-3-hydroxy-4-methylpentanoate (2-isopropylmalate). This is 2-isopropylmalate synthase from Hydrogenovibrio crunogenus (strain DSM 25203 / XCL-2) (Thiomicrospira crunogena).